A 48-amino-acid chain; its full sequence is Probable antitoxin PhoAT (48 aa).

This sequence belongs to the PhoAT antitoxin family. In terms of assembly, interacts with toxin PhoH2.

In terms of biological role, probable antitoxin component of a type II toxin-antitoxin (TA) system. The probable cognate antitoxin is PhoAT; the toxin gene can be expressed in the absence of the antitoxin gene in M.smegmatis strain mc(2)155. In Mycolicibacterium smegmatis (strain ATCC 700084 / mc(2)155) (Mycobacterium smegmatis), this protein is Probable antitoxin PhoAT.